A 286-amino-acid polypeptide reads, in one-letter code: Small ribosomal subunit protein uS2 (286 aa).

Residues 257-286 (KDNKSNKSNTINADENIKESDLIGGSNNEG) form a disordered region.

The protein belongs to the universal ribosomal protein uS2 family.

The polypeptide is Small ribosomal subunit protein uS2 (Ehrlichia ruminantium (strain Gardel)).